The following is a 141-amino-acid chain: Nucleoside diphosphate kinase (141 aa).

ATP contacts are provided by Lys9, Phe57, Arg85, Thr91, Arg102, and Asn112. The active-site Pros-phosphohistidine intermediate is the His115.

Belongs to the NDK family. In terms of assembly, homotetramer. Mg(2+) is required as a cofactor.

The protein resides in the cytoplasm. It carries out the reaction a 2'-deoxyribonucleoside 5'-diphosphate + ATP = a 2'-deoxyribonucleoside 5'-triphosphate + ADP. It catalyses the reaction a ribonucleoside 5'-diphosphate + ATP = a ribonucleoside 5'-triphosphate + ADP. Major role in the synthesis of nucleoside triphosphates other than ATP. The ATP gamma phosphate is transferred to the NDP beta phosphate via a ping-pong mechanism, using a phosphorylated active-site intermediate. The chain is Nucleoside diphosphate kinase from Chlamydia trachomatis serovar A (strain ATCC VR-571B / DSM 19440 / HAR-13).